Reading from the N-terminus, the 447-residue chain is Glutamyl-tRNA reductase (447 aa).

Residues Thr-49–Arg-52, Ser-109, Glu-114–Gln-116, and Gln-120 each bind substrate. Cys-50 (nucleophile) is an active-site residue. Gly-189 to Gly-194 contacts NADP(+).

Belongs to the glutamyl-tRNA reductase family. As to quaternary structure, homodimer.

It carries out the reaction (S)-4-amino-5-oxopentanoate + tRNA(Glu) + NADP(+) = L-glutamyl-tRNA(Glu) + NADPH + H(+). It participates in porphyrin-containing compound metabolism; protoporphyrin-IX biosynthesis; 5-aminolevulinate from L-glutamyl-tRNA(Glu): step 1/2. Functionally, catalyzes the NADPH-dependent reduction of glutamyl-tRNA(Glu) to glutamate 1-semialdehyde (GSA). This chain is Glutamyl-tRNA reductase, found in Mycobacterium sp. (strain JLS).